A 565-amino-acid chain; its full sequence is Probable protease Gilli_2517 (565 aa).

In terms of biological role, probably a dedicated protease for substrate gasdermin bGSDM; cleaves the bGSDM precursor, releasing the pore-forming moiety, which integrates into the membrane and triggers cell death. Involved in defense against bacteriophages. Expression of bGSDM and this neighboring protease is not toxic in E.coli. This is Probable protease Gilli_2517 from Gillisia limnaea (strain DSM 15749 / LMG 21470 / R-8282).